Here is a 170-residue protein sequence, read N- to C-terminus: Adenine phosphoribosyltransferase (170 aa).

Belongs to the purine/pyrimidine phosphoribosyltransferase family. Homodimer.

The protein localises to the cytoplasm. It carries out the reaction AMP + diphosphate = 5-phospho-alpha-D-ribose 1-diphosphate + adenine. The protein operates within purine metabolism; AMP biosynthesis via salvage pathway; AMP from adenine: step 1/1. In terms of biological role, catalyzes a salvage reaction resulting in the formation of AMP, that is energically less costly than de novo synthesis. The chain is Adenine phosphoribosyltransferase from Streptococcus pneumoniae (strain Taiwan19F-14).